The primary structure comprises 204 residues: Dephospho-CoA kinase (204 aa).

A DPCK domain is found at 5 to 204 (VVGLTGGIGS…YLANLVKAML (200 aa)). Residue 13–18 (GSGKSA) coordinates ATP.

Belongs to the CoaE family.

It is found in the cytoplasm. It carries out the reaction 3'-dephospho-CoA + ATP = ADP + CoA + H(+). Its pathway is cofactor biosynthesis; coenzyme A biosynthesis; CoA from (R)-pantothenate: step 5/5. Catalyzes the phosphorylation of the 3'-hydroxyl group of dephosphocoenzyme A to form coenzyme A. The polypeptide is Dephospho-CoA kinase (Chromobacterium violaceum (strain ATCC 12472 / DSM 30191 / JCM 1249 / CCUG 213 / NBRC 12614 / NCIMB 9131 / NCTC 9757 / MK)).